The primary structure comprises 489 residues: MEPELEHTLPGTLTWSHSGGPESQEMDFLEQGENSWPSPAVATSSERTCAIRGVKASRWTRQEAVEEAEPPGLGEGAQSRPAAESTRQEATFPKATPLAQAVPLAEAETSPTGWDLLLPDCAASAGGSSTGDLELTIEFPAPEAWDCELEGLGKDRPRPGPSPQAPLLGLSWDDELQKPGAQVYMHFMQEHTCYDAMATSSKLVIFDTTLEIKKAFFAMVANGVRAAPLWDSKKQSFVGMLTITDFILVLHRYYRSPLVQIYEIEEHKIETWREIYLQGCFKPLVSISPNDSLFEAVYALIKNRIHRLPVLDPVSGTVLYILTHKRLLKFLHIFGALLPRPSFLCRTIQDLGIGTFRDLAVVLETAPVLTALDIFVDRRVSALPVVNESGQVVGLYSRFDVIHLAAQQTYNHLDMSVGEALRQRTLCLEGVLSCQPHESLGEVIDRIAREQVHRLVLVDETQHLLGVVSLSDILQALVLSPAGIDALSA.

The disordered stretch occupies residues 1–95 (MEPELEHTLP…TRQEATFPKA (95 aa)). A compositionally biased stretch (polar residues) spans 32–47 (GENSWPSPAVATSSER). CBS domains lie at 197 to 258 (MATS…RSPL), 280 to 340 (CFKP…LLPR), and 355 to 415 (TFRD…HLDM). Residues Arg225, 240 to 245 (MLTITD), Val285, 306 to 307 (HR), and Lys325 contribute to the ADP site. AMP contacts are provided by residues Arg225, 240–245 (MLTITD), Val285, His306, 306–307 (HR), Lys325, Thr355, Ala360, 381–382 (SA), 397–400 (SRFD), Arg424, Leu432, His453, 453–454 (HR), and 469–472 (SLSD). ATP contacts are provided by residues Arg225, 240–245 (MLTITD), Val285, 306–307 (HR), Arg307, and Lys325. Residues 293 to 314 (LFEAVYALIKNRIHRLPVLDPV) carry the AMPK pseudosubstrate motif. ADP contacts are provided by residues 397-400 (SRFD), Arg424, Leu432, and 453-454 (HR). ATP contacts are provided by residues 397 to 400 (SRFD), Arg424, Leu432, and 453 to 454 (HR). Residues 427–486 (CLEGVLSCQPHESLGEVIDRIAREQVHRLVLVDETQHLLGVVSLSDILQALVLSPAGIDA) enclose the CBS 4 domain.

This sequence belongs to the 5'-AMP-activated protein kinase gamma subunit family. In terms of assembly, AMPK is a heterotrimer of an alpha catalytic subunit (PRKAA1 or PRKAA2), a beta (PRKAB1 or PRKAB2) and a gamma non-catalytic subunits (PRKAG1, PRKAG2 or PRKAG3). Interacts with FNIP1 and FNIP2. Post-translationally, phosphorylated by ULK1; leading to negatively regulate AMPK activity and suggesting the existence of a regulatory feedback loop between ULK1 and AMPK. Glycosylated; O-GlcNAcylated by OGT, promoting the AMP-activated protein kinase (AMPK) activity.

Its function is as follows. AMP/ATP-binding subunit of AMP-activated protein kinase (AMPK), an energy sensor protein kinase that plays a key role in regulating cellular energy metabolism. In response to reduction of intracellular ATP levels, AMPK activates energy-producing pathways and inhibits energy-consuming processes: inhibits protein, carbohydrate and lipid biosynthesis, as well as cell growth and proliferation. AMPK acts via direct phosphorylation of metabolic enzymes, and by longer-term effects via phosphorylation of transcription regulators. AMPK also acts as a regulator of cellular polarity by remodeling the actin cytoskeleton; probably by indirectly activating myosin. The AMPK gamma3 subunit is a non-catalytic subunit with a regulatory role in muscle energy metabolism. It mediates binding to AMP, ADP and ATP, leading to AMPK activation or inhibition: AMP-binding results in allosteric activation of alpha catalytic subunit (PRKAA1 or PRKAA2) both by inducing phosphorylation and preventing dephosphorylation of catalytic subunits. ADP also stimulates phosphorylation, without stimulating already phosphorylated catalytic subunit. ATP promotes dephosphorylation of catalytic subunit, rendering the AMPK enzyme inactive. The protein is 5'-AMP-activated protein kinase subunit gamma-3 (Prkag3) of Mus musculus (Mouse).